The following is a 329-amino-acid chain: Tetraacyldisaccharide 4'-kinase (329 aa).

57–64 lines the ATP pocket; the sequence is TAGGSGKT.

The protein belongs to the LpxK family.

It catalyses the reaction a lipid A disaccharide + ATP = a lipid IVA + ADP + H(+). It functions in the pathway glycolipid biosynthesis; lipid IV(A) biosynthesis; lipid IV(A) from (3R)-3-hydroxytetradecanoyl-[acyl-carrier-protein] and UDP-N-acetyl-alpha-D-glucosamine: step 6/6. In terms of biological role, transfers the gamma-phosphate of ATP to the 4'-position of a tetraacyldisaccharide 1-phosphate intermediate (termed DS-1-P) to form tetraacyldisaccharide 1,4'-bis-phosphate (lipid IVA). In Thiobacillus denitrificans (strain ATCC 25259 / T1), this protein is Tetraacyldisaccharide 4'-kinase.